Here is a 1205-residue protein sequence, read N- to C-terminus: cGMP-specific 3',5'-cyclic phosphodiesterase (1205 aa).

The disordered stretch occupies residues 1 to 153 (MTDVSSPAGG…TKASTTASQQ (153 aa)). Residues 18 to 32 (TTSSSPAATTSASSS) are compositionally biased toward low complexity. Residues 33 to 48 (KPLTNGANKTTISTTA) show a composition bias toward polar residues. Residues 62-71 (GAIPASSSSG) show a composition bias toward low complexity. Polar residues predominate over residues 83–94 (SNNNRPAATNRS). The segment covering 118-140 (SSSSPSQSPSQTQASIQTQTSQQ) has biased composition (low complexity). GAF domains follow at residues 259–411 (DIDV…GIGI) and 443–624 (NLEC…GLGI). Residues 654-1052 (SQDQTEKLTQ…RNWQDLAEKV (399 aa)) form the PDEase domain. The Proton donor role is filled by histidine 730. Residues histidine 734, histidine 770, aspartate 771, and aspartate 956 each contribute to the a divalent metal cation site. Disordered stretches follow at residues 1093–1122 (QQSQHGSEDSHTPEHQRSGSRLSMKKTGAL) and 1152–1205 (SHVS…CALL). Basic and acidic residues-rich tracts occupy residues 1098-1109 (GSEDSHTPEHQR) and 1152-1162 (SHVSEDMDDKS). A compositionally biased stretch (low complexity) spans 1171 to 1191 (ASGSMGRMSASSSTSSAGGQM). Residues 1195–1205 (SKKRSKLCALL) show a composition bias toward basic residues. Residue cysteine 1202 is modified to Cysteine methyl ester. Cysteine 1202 carries S-farnesyl cysteine lipidation. Positions 1203-1205 (ALL) are cleaved as a propeptide — removed in mature form.

This sequence belongs to the cyclic nucleotide phosphodiesterase family. Interacts with PrBP. A divalent metal cation serves as cofactor.

Its subcellular location is the cell membrane. The catalysed reaction is 3',5'-cyclic GMP + H2O = GMP + H(+). Its function is as follows. Has a role regulating cGMP transport in Malpighian tubule principal cells. In Drosophila sechellia (Fruit fly), this protein is cGMP-specific 3',5'-cyclic phosphodiesterase.